A 63-amino-acid polypeptide reads, in one-letter code: Ferredoxin (63 aa).

The 28-residue stretch at 2 to 29 (KVTVDQDLCIACGTCIDLCPSVFDWDDE) folds into the 4Fe-4S ferredoxin-type domain. Positions 10, 13, 16, and 55 each coordinate [4Fe-4S] cluster.

Requires [4Fe-4S] cluster as cofactor.

Ferredoxins are iron-sulfur proteins that transfer electrons in a wide variety of metabolic reactions. The chain is Ferredoxin from Moorella thermoacetica (Clostridium thermoaceticum).